The primary structure comprises 401 residues: Argininosuccinate synthase (401 aa).

8 to 16 (AYSGGLDTS) contributes to the ATP binding site. Position 85 (Y85) interacts with L-citrulline. Residue G115 participates in ATP binding. L-aspartate is bound by residues T117, N121, and D122. N121 contacts L-citrulline. 4 residues coordinate L-citrulline: R125, S173, E258, and Y270.

The protein belongs to the argininosuccinate synthase family. Type 1 subfamily. Homotetramer.

Its subcellular location is the cytoplasm. The catalysed reaction is L-citrulline + L-aspartate + ATP = 2-(N(omega)-L-arginino)succinate + AMP + diphosphate + H(+). The protein operates within amino-acid biosynthesis; L-arginine biosynthesis; L-arginine from L-ornithine and carbamoyl phosphate: step 2/3. This chain is Argininosuccinate synthase, found in Staphylococcus aureus (strain MRSA252).